The chain runs to 409 residues: Na(+)-translocating NADH-quinone reductase subunit F (409 aa).

A helical transmembrane segment spans residues 5–25; it reads FIFGIIAFTALVLVLAVIILF. Residues 34–128 enclose the 2Fe-2S ferredoxin-type domain; sequence GDITISINDD…SMDVELPEEI (95 aa). [2Fe-2S] cluster contacts are provided by Cys71, Cys77, Cys80, and Cys112. The region spanning 131-271 is the FAD-binding FR-type domain; that stretch reads VKKWECTVIS…SGPFGEFFAK (141 aa).

It belongs to the NqrF family. In terms of assembly, composed of six subunits; NqrA, NqrB, NqrC, NqrD, NqrE and NqrF. Requires [2Fe-2S] cluster as cofactor. FAD is required as a cofactor.

Its subcellular location is the cell inner membrane. It carries out the reaction a ubiquinone + n Na(+)(in) + NADH + H(+) = a ubiquinol + n Na(+)(out) + NAD(+). Its function is as follows. NQR complex catalyzes the reduction of ubiquinone-1 to ubiquinol by two successive reactions, coupled with the transport of Na(+) ions from the cytoplasm to the periplasm. The first step is catalyzed by NqrF, which accepts electrons from NADH and reduces ubiquinone-1 to ubisemiquinone by a one-electron transfer pathway. The sequence is that of Na(+)-translocating NADH-quinone reductase subunit F from Haemophilus ducreyi (strain 35000HP / ATCC 700724).